The chain runs to 242 residues: 3-deoxy-manno-octulosonate cytidylyltransferase (242 aa).

Belongs to the KdsB family.

The protein resides in the cytoplasm. It carries out the reaction 3-deoxy-alpha-D-manno-oct-2-ulosonate + CTP = CMP-3-deoxy-beta-D-manno-octulosonate + diphosphate. It participates in nucleotide-sugar biosynthesis; CMP-3-deoxy-D-manno-octulosonate biosynthesis; CMP-3-deoxy-D-manno-octulosonate from 3-deoxy-D-manno-octulosonate and CTP: step 1/1. The protein operates within bacterial outer membrane biogenesis; lipopolysaccharide biosynthesis. In terms of biological role, activates KDO (a required 8-carbon sugar) for incorporation into bacterial lipopolysaccharide in Gram-negative bacteria. The chain is 3-deoxy-manno-octulosonate cytidylyltransferase from Anaeromyxobacter dehalogenans (strain 2CP-C).